The primary structure comprises 284 residues: D-tagatose-1,6-bisphosphate aldolase subunit GatY (284 aa).

The active-site Proton donor is D82. Zn(2+) contacts are provided by H83 and H180. Position 181 (G181) interacts with dihydroxyacetone phosphate. Residue H208 coordinates Zn(2+). Dihydroxyacetone phosphate contacts are provided by residues 209–211 (GAS) and 230–233 (NVAT).

This sequence belongs to the class II fructose-bisphosphate aldolase family. TagBP aldolase GatY subfamily. In terms of assembly, forms a complex with GatZ. Zn(2+) serves as cofactor.

It catalyses the reaction D-tagatofuranose 1,6-bisphosphate = D-glyceraldehyde 3-phosphate + dihydroxyacetone phosphate. It functions in the pathway carbohydrate metabolism; D-tagatose 6-phosphate degradation; D-glyceraldehyde 3-phosphate and glycerone phosphate from D-tagatose 6-phosphate: step 2/2. Its function is as follows. Catalytic subunit of the tagatose-1,6-bisphosphate aldolase GatYZ, which catalyzes the reversible aldol condensation of dihydroxyacetone phosphate (DHAP or glycerone-phosphate) with glyceraldehyde 3-phosphate (G3P) to produce tagatose 1,6-bisphosphate (TBP). Requires GatZ subunit for full activity and stability. Is involved in the catabolism of galactitol. The protein is D-tagatose-1,6-bisphosphate aldolase subunit GatY of Escherichia coli O45:K1 (strain S88 / ExPEC).